Reading from the N-terminus, the 1132-residue chain is Error-prone DNA polymerase (1132 aa).

It belongs to the DNA polymerase type-C family. DnaE2 subfamily.

It localises to the cytoplasm. The catalysed reaction is DNA(n) + a 2'-deoxyribonucleoside 5'-triphosphate = DNA(n+1) + diphosphate. DNA polymerase involved in damage-induced mutagenesis and translesion synthesis (TLS). It is not the major replicative DNA polymerase. The sequence is that of Error-prone DNA polymerase from Anaeromyxobacter dehalogenans (strain 2CP-C).